The chain runs to 158 residues: NAD(P)H-quinone oxidoreductase subunit J, chloroplastic (158 aa).

This sequence belongs to the complex I 30 kDa subunit family. NDH is composed of at least 16 different subunits, 5 of which are encoded in the nucleus.

The protein localises to the plastid. It is found in the chloroplast thylakoid membrane. It carries out the reaction a plastoquinone + NADH + (n+1) H(+)(in) = a plastoquinol + NAD(+) + n H(+)(out). The catalysed reaction is a plastoquinone + NADPH + (n+1) H(+)(in) = a plastoquinol + NADP(+) + n H(+)(out). Its function is as follows. NDH shuttles electrons from NAD(P)H:plastoquinone, via FMN and iron-sulfur (Fe-S) centers, to quinones in the photosynthetic chain and possibly in a chloroplast respiratory chain. The immediate electron acceptor for the enzyme in this species is believed to be plastoquinone. Couples the redox reaction to proton translocation, and thus conserves the redox energy in a proton gradient. The polypeptide is NAD(P)H-quinone oxidoreductase subunit J, chloroplastic (Eucalyptus globulus subsp. globulus (Tasmanian blue gum)).